Here is a 1620-residue protein sequence, read N- to C-terminus: ABC-type organic anion transporter ABCA8B (1620 aa).

7 helical membrane-spanning segments follow: residues 30-50 (SLMEWVSSLLLLLFLYWYPHG), 223-243 (FFIFTCIISFSPITYYVSINV), 267-287 (SWGLLYAGFVFIMALSLALVI), 298-318 (FMVVFSLFLLYGLSMITLAFL), 326-346 (SVLTGLSVFLLTIFWGSLGFT), 352-372 (LPAPVEWTLSLFSPFAFTLGM), and 396-416 (LIIATNFMLVFDAFLYLALMM). An ABC transporter 1 domain is found at 479 to 714 (IRIRNISKEY…WGVGYHLSLQ (236 aa)). 515-522 (GHSGAGKS) contributes to the ATP binding site. A glycan (N-linked (GlcNAc...) asparagine) is linked at Asn-723. Helical transmembrane passes span 860–880 (TLLSVLLILVVGICPFLFENI), 979–999 (CFPVLMDILSNGLLGMVKPSA), 1023–1043 (TAFWLILTSACPPYIAMSSVT), 1069–1089 (MVDIPLYCFVFLFMSLMDYLF), 1105–1125 (IPCSVGYAISLIFLTYVISFI), 1135–1155 (IWSLSFYIITVFSVAVILLAF), 1164–1184 (IIFLIPPSTLVGCLILSLHLF), and 1194–1214 (VIEPFLVFLIPFLHVFIFIFT). Residues 1283–1516 (LRKEYAGKQK…FGKDYLLEMK (234 aa)) enclose the ABC transporter 2 domain. 1321-1328 (GHNGAGKS) contacts ATP.

It belongs to the ABC transporter superfamily. ABCA family. Expressed in heart, brain, lung, liver and skeletal muscle. Highly expressed in the liver, and is also abundant in heart and skeletal muscle. Highly expressed in liver.

The protein resides in the cell membrane. Its subcellular location is the basolateral cell membrane. The enzyme catalyses taurocholate(in) + ATP + H2O = taurocholate(out) + ADP + phosphate + H(+). It catalyses the reaction cholesterol(in) + ATP + H2O = cholesterol(out) + ADP + phosphate + H(+). Its activity is regulated as follows. Cholesterol efflux is increased by extracellularly applied taurocholate. Functionally, mediates cholesterol and taurocholate efflux. Through the interaction with ABCA1 potentiates the cholesterol efflux to lipid-free APOA1, in turn regulates high-density lipoprotein cholesterol levels. This is ABC-type organic anion transporter ABCA8B from Mus musculus (Mouse).